The primary structure comprises 685 residues: Galactocerebrosidase (685 aa).

An N-terminal signal peptide occupies residues 1–42 (MAEWLLSASWQRRAKAMTAAAGSAGRAAVPLLLCALLAPGGA). A substrate-binding site is contributed by threonine 109. A glycan (N-linked (GlcNAc...) asparagine) is linked at asparagine 143. Positions 151 and 197 each coordinate substrate. Residue glutamate 198 is the Proton donor/acceptor of the active site. Glutamate 274 (nucleophile) is an active-site residue. An intrachain disulfide couples cysteine 287 to cysteine 394. Asparagine 379 carries an N-linked (GlcNAc...) asparagine glycan. Arginine 396 is a substrate binding site. Residues asparagine 403, asparagine 556, asparagine 559, and asparagine 602 are each glycosylated (N-linked (GlcNAc...) asparagine).

This sequence belongs to the glycosyl hydrolase 59 family. In terms of tissue distribution, detected in urine. Detected in testis, brain and placenta (at protein level). Detected in kidney and liver.

Its subcellular location is the lysosome. It catalyses the reaction a beta-D-galactosyl-(1&lt;-&gt;1')-N-acylsphing-4-enine + H2O = an N-acylsphing-4-enine + D-galactose. The enzyme catalyses beta-D-galactosyl-(1&lt;-&gt;1)-sphing-4-enine + H2O = sphing-4-enine + D-galactose. The catalysed reaction is a D-galactosylceramide + H2O = an N-acyl-sphingoid base + D-galactose. In terms of biological role, hydrolyzes the galactose ester bonds of glycolipids such as galactosylceramide and galactosylsphingosine. Enzyme with very low activity responsible for the lysosomal catabolism of galactosylceramide, a major lipid in myelin, kidney and epithelial cells of small intestine and colon. The chain is Galactocerebrosidase from Homo sapiens (Human).